Here is a 533-residue protein sequence, read N- to C-terminus: Tyrosine decarboxylase (533 aa).

Residues 1–22 (MAPPSHCHTINGGAPRNGAIPE) are disordered. Pyridoxal 5'-phosphate contacts are provided by T281 and N336. K339 carries the N6-(pyridoxal phosphate)lysine modification.

It belongs to the group II decarboxylase family. Requires pyridoxal 5'-phosphate as cofactor.

It carries out the reaction L-tyrosine + H(+) = tyramine + CO2. In terms of biological role, catalyzes the decarboxylation of L-tyrosine to tyramine, which can be converted to the hydroxycinnamic acid amides feruloyltyramine and 4-coumaroyltyramine. Possesses low tryptophan decarboxylase activity. The polypeptide is Tyrosine decarboxylase (Oryza sativa subsp. japonica (Rice)).